Consider the following 423-residue polypeptide: ATP-dependent RNA helicase RhlB (423 aa).

The short motif at 9 to 37 (LRFSDLPLHHQVLAALQEKGFDYCTPIQA) is the Q motif element. Residues 40–217 (LPMSLAGKDV…FEDMNDPEYV (178 aa)) enclose the Helicase ATP-binding domain. ATP is bound at residue 53–60 (AQTGTGKT). Positions 163-166 (DEAD) match the DEAD box motif. In terms of domain architecture, Helicase C-terminal spans 241-388 (KMALLLTLLE…VSQYDVAALL (148 aa)). The disordered stretch occupies residues 397–423 (KRGNNNSKNSANSNRTFQKKRSLKRNF). Residues 400 to 410 (NNNSKNSANSN) show a composition bias toward low complexity. Positions 413-423 (FQKKRSLKRNF) are enriched in basic residues.

It belongs to the DEAD box helicase family. RhlB subfamily. Component of the RNA degradosome, which is a multiprotein complex involved in RNA processing and mRNA degradation.

The protein resides in the cytoplasm. It catalyses the reaction ATP + H2O = ADP + phosphate + H(+). Functionally, DEAD-box RNA helicase involved in RNA degradation. Has RNA-dependent ATPase activity and unwinds double-stranded RNA. The polypeptide is ATP-dependent RNA helicase RhlB (Pasteurella multocida (strain Pm70)).